We begin with the raw amino-acid sequence, 465 residues long: Cytochrome P450 85A1 (465 aa).

A helical transmembrane segment spans residues 2 to 22; that stretch reads GAMMVMMGLLLIIVSLCSALL. Cysteine 415 provides a ligand contact to heme.

The protein belongs to the cytochrome P450 family. It depends on heme as a cofactor. As to expression, mainly expressed in apical shoots, hypocotyls, siliques and roots. Also present in the female gametophyte.

Its subcellular location is the membrane. It catalyses the reaction 6-deoxoteasterone + reduced [NADPH--hemoprotein reductase] + O2 = 6alpha-hydroxyteasterone + oxidized [NADPH--hemoprotein reductase] + H2O + H(+). It carries out the reaction 6alpha-hydroxytyphasterol + reduced [NADPH--hemoprotein reductase] + O2 = teasterone + oxidized [NADPH--hemoprotein reductase] + 2 H2O + H(+). The catalysed reaction is 3-dehydro-6-deoxoteasterone + reduced [NADPH--hemoprotein reductase] + O2 = 3-dehydro-6alpha-hydroxyteasterone + oxidized [NADPH--hemoprotein reductase] + H2O + H(+). The enzyme catalyses 3-dehydro-6alpha-hydroxyteasterone + reduced [NADPH--hemoprotein reductase] + O2 = 3-dehydroteasterone + oxidized [NADPH--hemoprotein reductase] + 2 H2O + H(+). It catalyses the reaction 6-deoxotyphasterol + reduced [NADPH--hemoprotein reductase] + O2 = 6alpha-hydroxytyphasterol + oxidized [NADPH--hemoprotein reductase] + H2O + H(+). It carries out the reaction 6alpha-hydroxytyphasterol + reduced [NADPH--hemoprotein reductase] + O2 = typhasterol + oxidized [NADPH--hemoprotein reductase] + 2 H2O + H(+). The catalysed reaction is 6-deoxocastasterone + reduced [NADPH--hemoprotein reductase] + O2 = 6alpha-hydroxycastasterone + oxidized [NADPH--hemoprotein reductase] + H2O + H(+). The enzyme catalyses 6alpha-hydroxycastasterone + reduced [NADPH--hemoprotein reductase] + O2 = castasterone + oxidized [NADPH--hemoprotein reductase] + 2 H2O + H(+). It catalyses the reaction 6-deoxocastasterone + 2 reduced [NADPH--hemoprotein reductase] + 2 O2 = castasterone + 2 oxidized [NADPH--hemoprotein reductase] + 3 H2O + 2 H(+). It carries out the reaction 6-deoxoteasterone + 2 reduced [NADPH--hemoprotein reductase] + 2 O2 = teasterone + 2 oxidized [NADPH--hemoprotein reductase] + 3 H2O + 2 H(+). The catalysed reaction is 6-deoxotyphasterol + 2 reduced [NADPH--hemoprotein reductase] + 2 O2 = typhasterol + 2 oxidized [NADPH--hemoprotein reductase] + 3 H2O + 2 H(+). The enzyme catalyses 3-dehydro-6-deoxoteasterone + 2 reduced [NADPH--hemoprotein reductase] + 2 O2 = 3-dehydroteasterone + 2 oxidized [NADPH--hemoprotein reductase] + 3 H2O + 2 H(+). It functions in the pathway plant hormone biosynthesis; brassinosteroid biosynthesis. Functionally, catalyzes the C6-oxidation step in brassinosteroids biosynthesis. Converts 6-deoxocastasterone (6-deoxoCS) to castasterone (CS). May also convert 6-deoxoteasterone (6-deoxoTE) to teasterone (TE), 3-dehydro-6-deoxoteasterone (6-deoxo3DT, 6-deoxo-3-DHT) to 3-dehydroteasterone (3DT, 3-DHT), and 6-deoxotyphasterol (6-deoxoTY) to typhasterol (TY). Required for the initiation of female gametogenesis (megagametogenesis). The chain is Cytochrome P450 85A1 from Arabidopsis thaliana (Mouse-ear cress).